A 417-amino-acid polypeptide reads, in one-letter code: Gamma-glutamyl phosphate reductase (417 aa).

The protein belongs to the gamma-glutamyl phosphate reductase family.

The protein resides in the cytoplasm. It catalyses the reaction L-glutamate 5-semialdehyde + phosphate + NADP(+) = L-glutamyl 5-phosphate + NADPH + H(+). It participates in amino-acid biosynthesis; L-proline biosynthesis; L-glutamate 5-semialdehyde from L-glutamate: step 2/2. Its function is as follows. Catalyzes the NADPH-dependent reduction of L-glutamate 5-phosphate into L-glutamate 5-semialdehyde and phosphate. The product spontaneously undergoes cyclization to form 1-pyrroline-5-carboxylate. This is Gamma-glutamyl phosphate reductase from Shigella flexneri serotype 5b (strain 8401).